The chain runs to 292 residues: 4-diphosphocytidyl-2-C-methyl-D-erythritol kinase (292 aa).

Lysine 20 is a catalytic residue. An ATP-binding site is contributed by 103–113; the sequence is PMGGGIGGGSS. Residue aspartate 145 is part of the active site.

It belongs to the GHMP kinase family. IspE subfamily.

The catalysed reaction is 4-CDP-2-C-methyl-D-erythritol + ATP = 4-CDP-2-C-methyl-D-erythritol 2-phosphate + ADP + H(+). It functions in the pathway isoprenoid biosynthesis; isopentenyl diphosphate biosynthesis via DXP pathway; isopentenyl diphosphate from 1-deoxy-D-xylulose 5-phosphate: step 3/6. In terms of biological role, catalyzes the phosphorylation of the position 2 hydroxy group of 4-diphosphocytidyl-2C-methyl-D-erythritol. In Cupriavidus metallidurans (strain ATCC 43123 / DSM 2839 / NBRC 102507 / CH34) (Ralstonia metallidurans), this protein is 4-diphosphocytidyl-2-C-methyl-D-erythritol kinase.